Reading from the N-terminus, the 206-residue chain is High frequency lysogenization protein HflD homolog (206 aa).

It belongs to the HflD family.

Its subcellular location is the cytoplasm. The protein resides in the cell inner membrane. The polypeptide is High frequency lysogenization protein HflD homolog (Pseudomonas aeruginosa (strain LESB58)).